Consider the following 446-residue polypeptide: UDP-N-acetylmuramoylalanine--D-glutamate ligase (446 aa).

Position 115-121 (glycine 115–threonine 121) interacts with ATP.

The protein belongs to the MurCDEF family.

It localises to the cytoplasm. It catalyses the reaction UDP-N-acetyl-alpha-D-muramoyl-L-alanine + D-glutamate + ATP = UDP-N-acetyl-alpha-D-muramoyl-L-alanyl-D-glutamate + ADP + phosphate + H(+). The protein operates within cell wall biogenesis; peptidoglycan biosynthesis. Cell wall formation. Catalyzes the addition of glutamate to the nucleotide precursor UDP-N-acetylmuramoyl-L-alanine (UMA). The polypeptide is UDP-N-acetylmuramoylalanine--D-glutamate ligase (Trichlorobacter lovleyi (strain ATCC BAA-1151 / DSM 17278 / SZ) (Geobacter lovleyi)).